The chain runs to 442 residues: UDP-glycosyltransferase 79B7 (442 aa).

UDP-alpha-D-glucose-binding positions include S260, V319 to Q321, H336 to E344, and L358 to Q361.

It belongs to the UDP-glycosyltransferase family.

The protein is UDP-glycosyltransferase 79B7 (UGT79B7) of Arabidopsis thaliana (Mouse-ear cress).